The sequence spans 932 residues: Valine--tRNA ligase (932 aa).

Residues 75–85 (PNVTGQLHMGH) carry the 'HIGH' region motif. The short motif at 568–572 (KMSKS) is the 'KMSKS' region element. Residue Lys-571 coordinates ATP. Residues 863–929 (TVDVAAERKR…ERITARLEGL (67 aa)) adopt a coiled-coil conformation.

This sequence belongs to the class-I aminoacyl-tRNA synthetase family. ValS type 1 subfamily. In terms of assembly, monomer.

The protein localises to the cytoplasm. The catalysed reaction is tRNA(Val) + L-valine + ATP = L-valyl-tRNA(Val) + AMP + diphosphate. In terms of biological role, catalyzes the attachment of valine to tRNA(Val). As ValRS can inadvertently accommodate and process structurally similar amino acids such as threonine, to avoid such errors, it has a 'posttransfer' editing activity that hydrolyzes mischarged Thr-tRNA(Val) in a tRNA-dependent manner. In Corynebacterium jeikeium (strain K411), this protein is Valine--tRNA ligase.